The chain runs to 152 residues: Large ribosomal subunit protein uL15 (152 aa).

Over residues 1–12 the composition is skewed to polar residues; sequence MTSTLNTLKSNT. The disordered stretch occupies residues 1 to 57; it reads MTSTLNTLKSNTGSRKKKLRKGRGIAAGQGASCGFGMRGQKSRSGRPTRPGFEGGQM. Basic residues predominate over residues 14–23; the sequence is SRKKKLRKGR. A compositionally biased stretch (gly residues) spans 25–37; that stretch reads IAAGQGASCGFGM.

Belongs to the universal ribosomal protein uL15 family. Part of the 50S ribosomal subunit.

Functionally, binds to the 23S rRNA. In Prochlorococcus marinus subsp. pastoris (strain CCMP1986 / NIES-2087 / MED4), this protein is Large ribosomal subunit protein uL15.